The sequence spans 309 residues: PI-PLC X domain-containing protein 1 (309 aa).

A PI-PLC X-box domain is found at 17–193 (HMWDIPLWNL…QVILSYDDES (177 aa)).

This Danio rerio (Zebrafish) protein is PI-PLC X domain-containing protein 1 (plcxd1).